Reading from the N-terminus, the 302-residue chain is MLAGNMEQANVFRLEEKRYKCRADTIPDMSEVLDPNDPQSFGFEALVEIKPRVFSFQKAPGLLILKNYVSSELQMQLLKSIMFTQIQDPENKTNLSPFYQLPLGNDSIWRRYYNGDGESIIDGLGETKPLTVDRLVHKKLRWVTLGEQYDWTTKEYPDPSKSPGFPKDLGDFVEKVVKESTDFLHWKAEAAIVNFYSPGDTLSAHIDESEEDLTLPLISLSMGLDCIYLIGTESRSEKPSALRLHSGDVVIMTGTSRKAFHAVPKIIPNSTPNYLLTGNKAWDGWISRKRVNFNVRQVRPSR.

Substrate contacts are provided by residues Trp-142 and 149–151; that span reads YDW. The region spanning 187–299 is the Fe2OG dioxygenase domain; sequence KAEAAIVNFY…RVNFNVRQVR (113 aa). 194-196 provides a ligand contact to 2-oxoglutarate; sequence NFY. The Fe cation site is built by His-205 and Asp-207. Arg-235 contacts substrate. His-261 contributes to the Fe cation binding site. Residue 290–296 coordinates 2-oxoglutarate; that stretch reads RVNFNVR.

Belongs to the alkB family. Fe(2+) serves as cofactor.

It localises to the cytoplasm. The protein resides in the nucleus. It catalyses the reaction an N(1)-methyladenosine in tRNA + 2-oxoglutarate + O2 = an adenosine in tRNA + formaldehyde + succinate + CO2. The enzyme catalyses N(1)-methyladenosine(58) in tRNA + 2-oxoglutarate + O2 = adenosine(58) in tRNA + formaldehyde + succinate + CO2. Functionally, dioxygenase that acts as on nucleic acids, such as DNA and tRNA. Requires molecular oxygen, alpha-ketoglutarate and iron. Mainly acts as a tRNA demethylase by removing N(1)-methyladenine from various tRNAs, with a preference for N(1)-methyladenine at position 58 (m1A58) present on a stem loop structure of tRNAs. Acts as a regulator of translation initiation and elongation. Does not appear to possess DNA repair activity; no activity towards methylated DNA or etheno adducts. Exhibits a weak and unstable DNA lyase activity; this activity is probably not biologically significant and proceeds by a mechanism different from the classical dioxygenase reaction as it does not require 2-oxoglutarate or iron. The protein is tRNA demethylase abh1 (abh1) of Schizosaccharomyces pombe (strain 972 / ATCC 24843) (Fission yeast).